The following is a 413-amino-acid chain: CinA-like protein (413 aa).

It belongs to the CinA family.

This Geobacter metallireducens (strain ATCC 53774 / DSM 7210 / GS-15) protein is CinA-like protein.